A 225-amino-acid polypeptide reads, in one-letter code: Histone H1.5 (225 aa).

Residues 1–23 (MSDVAVAETPAVKTPTKASKATK) form a disordered region. Ser-2 carries the N-acetylserine modification. The segment covering 9–19 (TPAVKTPTKAS) has biased composition (low complexity). In terms of domain architecture, H15 spans 37–113 (AHPPFINMIT…GANGRFRLAV (77 aa)). The segment covering 145–156 (KKTVAKKTGDKV) has biased composition (basic and acidic residues). A disordered region spans residues 145 to 225 (KKTVAKKTGD…RKAVGTAPKA (81 aa)). The span at 157-175 (KKVKSPKRIAKPAVKKVTK) shows a compositional bias: basic residues. Positions 176 to 208 (KAAAPTKSAANETAPKKAAATEAAPKKAAVTKA) are enriched in low complexity.

It belongs to the histone H1/H5 family.

The protein resides in the nucleus. It is found in the chromosome. Histones H1 are necessary for the condensation of nucleosome chains into higher-order structures. The sequence is that of Histone H1.5 (hil-5) from Caenorhabditis elegans.